We begin with the raw amino-acid sequence, 216 residues long: Octanoyltransferase (216 aa).

The BPL/LPL catalytic domain maps to 32-207 (SDSQDELWIV…TFSQIMGYQQ (176 aa)). Residues 71-78 (RGGQVTYH), 138-140 (SLG), and 151-153 (GLA) contribute to the substrate site. The active-site Acyl-thioester intermediate is Cys169.

The protein belongs to the LipB family.

It localises to the cytoplasm. It carries out the reaction octanoyl-[ACP] + L-lysyl-[protein] = N(6)-octanoyl-L-lysyl-[protein] + holo-[ACP] + H(+). Its pathway is protein modification; protein lipoylation via endogenous pathway; protein N(6)-(lipoyl)lysine from octanoyl-[acyl-carrier-protein]: step 1/2. Functionally, catalyzes the transfer of endogenously produced octanoic acid from octanoyl-acyl-carrier-protein onto the lipoyl domains of lipoate-dependent enzymes. Lipoyl-ACP can also act as a substrate although octanoyl-ACP is likely to be the physiological substrate. The protein is Octanoyltransferase of Shewanella frigidimarina (strain NCIMB 400).